A 396-amino-acid polypeptide reads, in one-letter code: Inositol polyphosphate 1-phosphatase (396 aa).

Aspartate 54 contributes to the Li(+) binding site. Position 79 (glutamate 79) interacts with Mg(2+). Li(+) is bound at residue glutamate 80. Residues aspartate 153 and isoleucine 155 each coordinate Mg(2+). 1D-myo-inositol 1,4-bisphosphate contacts are provided by aspartate 156, serine 157, threonine 158, serine 264, lysine 266, glycine 286, alanine 287, lysine 290, and threonine 308. A Mg(2+)-binding site is contributed by aspartate 313. Serine 314 bears the Phosphoserine mark.

The protein belongs to the inositol monophosphatase superfamily. Monomer. Mg(2+) serves as cofactor.

It carries out the reaction 1D-myo-inositol 1,4-bisphosphate + H2O = 1D-myo-inositol 4-phosphate + phosphate. It catalyses the reaction 1D-myo-inositol 1,3,4-trisphosphate + H2O = 1D-myo-inositol 3,4-bisphosphate + phosphate. The protein operates within signal transduction; phosphatidylinositol signaling pathway. With respect to regulation, inhibited by Li(+). Mg(2+)-dependent phosphatase that catalyzes the hydrolysis of the 1-position phosphate from inositol 1,4-bisphosphate and inositol 1,3,4-trisphosphate and participates in inositol phosphate metabolism. The protein is Inositol polyphosphate 1-phosphatase of Mus musculus (Mouse).